Reading from the N-terminus, the 461-residue chain is Photosynthetic NDH subunit of subcomplex B 1, chloroplastic (461 aa).

The transit peptide at 1 to 44 directs the protein to the chloroplast; that stretch reads MASSLPLLPKPISPFFKTPPFSTSKPLVFLNFQTRLTSRSSDVS. The disordered stretch occupies residues 66 to 90; sequence NEYGSLFADGKQDEDPRPPDNPDNP. A compositionally biased stretch (basic and acidic residues) spans 75–85; that stretch reads GKQDEDPRPPD.

In terms of assembly, part of the chloroplast NDH complex, composed of a mixture of chloroplast and nucleus encoded subunits. Component of the NDH subcomplex B, at least composed of PnsB1, PnsB2, PnsB3, PnsB4 and PnsB5.

Its subcellular location is the plastid. The protein localises to the chloroplast thylakoid membrane. Functionally, NDH shuttles electrons from NAD(P)H:plastoquinone, via FMN and iron-sulfur (Fe-S) centers, to quinones in the photosynthetic chain and possibly in a chloroplast respiratory chain. The immediate electron acceptor for the enzyme in this species is believed to be plastoquinone. Couples the redox reaction to proton translocation, and thus conserves the redox energy in a proton gradient. This chain is Photosynthetic NDH subunit of subcomplex B 1, chloroplastic, found in Arabidopsis thaliana (Mouse-ear cress).